The following is a 302-amino-acid chain: Surfeit locus protein 4 homolog (302 aa).

6 consecutive transmembrane segments (helical) span residues 95–115 (APLLLFVCVVLMLVGSTLVVF), 120–140 (AYAIGSLLFVTLLQAFAYGLI), 193–213 (VLLIFMFLGLLAKEGSGISWT), 215–235 (ILVHILSVTACAMVVIGFKAK), 236–256 (FFAAVLVLILSVANFIINSFW), and 271–291 (DFFQTLSIVGGLLYLVNTGPG). A Di-lysine motif motif is present at residues 299-302 (KKIY).

The protein belongs to the SURF4 family.

It is found in the endoplasmic reticulum membrane. In Schizosaccharomyces pombe (strain 972 / ATCC 24843) (Fission yeast), this protein is Surfeit locus protein 4 homolog.